The following is a 234-amino-acid chain: Glutathione S-transferase U11 (234 aa).

Positions 11–90 (EYVKLLGAWP…YVDETWLSGP (80 aa)) constitute a GST N-terminal domain. Residues 21–22 (SP), 47–48 (LS), 61–62 (QI), and 74–75 (ES) contribute to the glutathione site. One can recognise a GST C-terminal domain in the interval 96–228 (DPFDRAVARF…KLVQFARLKF (133 aa)).

It belongs to the GST superfamily. Tau family.

It is found in the cytoplasm. The protein localises to the cytosol. It catalyses the reaction RX + glutathione = an S-substituted glutathione + a halide anion + H(+). May be involved in the conjugation of reduced glutathione to a wide number of exogenous and endogenous hydrophobic electrophiles and have a detoxification role against certain herbicides. The protein is Glutathione S-transferase U11 (GSTU11) of Arabidopsis thaliana (Mouse-ear cress).